Here is a 424-residue protein sequence, read N- to C-terminus: MASSNLIKQLQERGLVAQVTDEEALAERLAQGPIALYCGFDPTADSLHLGHLVPLLCLKRFQQAGHKPVALVGGATGLIGDPSFKAAERKLNTEETVQEWVDKIRKQVAPFLDFDCGENSAIAANNYDWFGNMNVLTFLRDIGKHFSVNQMINKEAVKQRLNREDQGISFTEFSYNLLQGYDFACLNKQYGVVLQIGGSDQWGNITSGIDLTRRLHQNQVFGLTVPLITKADGTKFGKTEGGAVWLDPKKTSPYKFYQFWINTADADVYRFLKFFTFMSIEEINALEEEDKNSGKAPRAQYVLAEQVTRLVHGEDGLQAAKRITECLFSGSLSALSEADFEQLAQDGVPMVEMEKGADLMQALVDSELQPSRGQARKTIASNAITINGEKQSDPEYFFKEEDRLFGRFTLLRRGKKNYCLICWK.

An L-tyrosine-binding site is contributed by tyrosine 37. Residues 42-51 (PTADSLHLGH) carry the 'HIGH' region motif. Lysine 144 carries the N6-acetyllysine modification. The L-tyrosine site is built by tyrosine 175 and glutamine 179. Positions 235-239 (KFGKT) match the 'KMSKS' region motif. Lysine 238 lines the ATP pocket. Residues 357-414 (ADLMQALVDSELQPSRGQARKTIASNAITINGEKQSDPEYFFKEEDRLFGRFTLLRRG) form the S4 RNA-binding domain.

This sequence belongs to the class-I aminoacyl-tRNA synthetase family. TyrS type 1 subfamily. As to quaternary structure, homodimer.

It is found in the cytoplasm. It catalyses the reaction tRNA(Tyr) + L-tyrosine + ATP = L-tyrosyl-tRNA(Tyr) + AMP + diphosphate + H(+). Functionally, catalyzes the attachment of tyrosine to tRNA(Tyr) in a two-step reaction: tyrosine is first activated by ATP to form Tyr-AMP and then transferred to the acceptor end of tRNA(Tyr). The polypeptide is Tyrosine--tRNA ligase (Escherichia coli O127:H6 (strain E2348/69 / EPEC)).